The following is a 232-amino-acid chain: Ribonuclease P protein component 3 (232 aa).

The protein belongs to the eukaryotic/archaeal RNase P protein component 3 family. As to quaternary structure, consists of a catalytic RNA component and at least 4-5 protein subunits.

The protein resides in the cytoplasm. It carries out the reaction Endonucleolytic cleavage of RNA, removing 5'-extranucleotides from tRNA precursor.. Its function is as follows. Part of ribonuclease P, a protein complex that generates mature tRNA molecules by cleaving their 5'-ends. In Methanococcus maripaludis (strain C7 / ATCC BAA-1331), this protein is Ribonuclease P protein component 3.